The primary structure comprises 151 residues: Probable transcriptional regulator syrB2 (151 aa).

Residues 1 to 61 (MADESNTGSI…PRRYSEQQRK (61 aa)) are disordered. A compositionally biased stretch (low complexity) spans 11-23 (AAAVAPNADVKAP). Residues 24-35 (AAKKKRSPRRQK) are compositionally biased toward basic residues.

This sequence belongs to the SyrB family.

Functionally, seems to affect the transcription of cya3. May be negatively autoregulated. The protein is Probable transcriptional regulator syrB2 (syrB2) of Rhizobium meliloti (strain 1021) (Ensifer meliloti).